A 122-amino-acid chain; its full sequence is Large ribosomal subunit protein uL14 (122 aa).

The protein belongs to the universal ribosomal protein uL14 family. As to quaternary structure, part of the 50S ribosomal subunit. Forms a cluster with proteins L3 and L19. In the 70S ribosome, L14 and L19 interact and together make contacts with the 16S rRNA in bridges B5 and B8.

In terms of biological role, binds to 23S rRNA. Forms part of two intersubunit bridges in the 70S ribosome. This chain is Large ribosomal subunit protein uL14, found in Rhodococcus jostii (strain RHA1).